The sequence spans 1355 residues: Ecdysone-induced protein 75B, isoform A (1355 aa).

Disordered stretches follow at residues 60–91 (QHQP…QQHS), 126–228 (RLKN…DSSY), 248–268 (ELEQ…EAKP), and 308–344 (ATQQ…NSSA). A compositionally biased stretch (basic residues) spans 66-76 (QLHHQHQHQHQ). Composition is skewed to low complexity over residues 77-91 (HQQQ…QQHS) and 143-179 (TLVK…QHQQ). The segment covering 200 to 213 (SGIDEDSPNSDEDC) has biased composition (acidic residues). Polar residues-rich tracts occupy residues 218–228 (PAGTSLEDSSY) and 254–264 (TTGGSNAQQQV). Composition is skewed to low complexity over residues 308–321 (ATQQ…QHQH) and 330–344 (DSNC…NSSA). The segment at residues 384 to 474 (SQLNYLCQKF…VGMSRDAVRF (91 aa)) is a DNA-binding region (nuclear receptor). The segment at 387-421 (NYLCQKFDEKLDTALSNSSANTGRNTPAVTANEDA) adopts an NR C4-type; degenerate zinc-finger fold. An NR C4-type zinc finger spans residues 438–457 (CTKNQQCSILRINRNRCQYC). Residues 508–756 (DQPRLLAAVL…QQMWSMEDGN (249 aa)) form the NR LBD domain. Disordered regions lie at residues 780 to 821 (KSPL…SALA), 927 to 964 (LDSP…SVDD), 987 to 1007 (VSVS…KRQI), 1051 to 1117 (AEAD…SSHS), 1147 to 1260 (ENST…SNSA), and 1312 to 1344 (TVTA…NPGL). Low complexity-rich tracts occupy residues 797–809 (GSPS…GVSL), 948–960 (SSGG…SPRS), 987–1001 (VSVS…STSS), 1053–1098 (ADAS…AQSQ), and 1106–1117 (SSPKASMASSHS). Composition is skewed to polar residues over residues 1149-1162 (STAA…VGNR) and 1174-1196 (AVQN…QRQQ). Composition is skewed to low complexity over residues 1197 to 1233 (SVSP…SASS), 1242 to 1260 (STSN…SNSA), and 1315 to 1343 (ASNG…PNPG).

Belongs to the nuclear hormone receptor family. NR1 subfamily.

Its subcellular location is the nucleus. In terms of biological role, implicated in the regulation of ecdysone-triggered gene hierarchies. Probably plays a key role in mediating the regulation of the larval molt by 20-OH-ecdysone. The polypeptide is Ecdysone-induced protein 75B, isoform A (Eip75B) (Drosophila melanogaster (Fruit fly)).